We begin with the raw amino-acid sequence, 129 residues long: Large ribosomal subunit protein bL17 (129 aa).

Belongs to the bacterial ribosomal protein bL17 family. Part of the 50S ribosomal subunit. Contacts protein L32.

The protein is Large ribosomal subunit protein bL17 of Pasteurella multocida (strain Pm70).